A 1044-amino-acid polypeptide reads, in one-letter code: Isoleucine--tRNA ligase (1044 aa).

The 'HIGH' region signature appears at Pro48 to His58. The 'KMSKS' region motif lies at Lys594–Ser598. Lys597 is an ATP binding site.

This sequence belongs to the class-I aminoacyl-tRNA synthetase family. IleS type 2 subfamily. In terms of assembly, monomer. Zn(2+) is required as a cofactor.

Its subcellular location is the cytoplasm. The catalysed reaction is tRNA(Ile) + L-isoleucine + ATP = L-isoleucyl-tRNA(Ile) + AMP + diphosphate. Functionally, catalyzes the attachment of isoleucine to tRNA(Ile). As IleRS can inadvertently accommodate and process structurally similar amino acids such as valine, to avoid such errors it has two additional distinct tRNA(Ile)-dependent editing activities. One activity is designated as 'pretransfer' editing and involves the hydrolysis of activated Val-AMP. The other activity is designated 'posttransfer' editing and involves deacylation of mischarged Val-tRNA(Ile). The protein is Isoleucine--tRNA ligase of Borrelia duttonii (strain Ly).